Reading from the N-terminus, the 219-residue chain is MEKAEAAAVVIPLSVSNPSYRGSGMSDQEVSEEQSAGDAWVSAAMAAAEAVAAAATSTGIDNTNDYTYTAASENGDPGFTLGDNTYGPNGAASGCPSPPSPEVVGLEMVVVSSLAPEIAAAVPADTISASAAAPATRVDDGNAPLLGPGQAQDYDSESGCYYSESDNETASMFIRRVGRRQARRHRRRRVALTVAGVILVVVLCAISGIVGAFLARVFP.

Topologically, residues 1–193 are intravirion; it reads MEKAEAAAVV…RHRRRRVALT (193 aa). Residues 145-146 carry the Di-leucine internalization motif motif; that stretch reads LL. An acidic region spans residues 153-168; sequence DYDSESGCYYSESDNE. Ser163 and Ser165 each carry phosphoserine; by host CK2. The helical; Signal-anchor for type II membrane protein transmembrane segment at 194–214 threads the bilayer; the sequence is VAGVILVVVLCAISGIVGAFL. Topologically, residues 215–219 are virion surface; sequence ARVFP.

This sequence belongs to the alphaherpesvirinae envelope protein US9 family. In terms of processing, phosphorylated on serines within the acidic cluster. Phosphorylation determines whether endocytosed viral US9 traffics to the trans-Golgi network or recycles to the cell membrane.

Its subcellular location is the virion membrane. The protein resides in the host Golgi apparatus membrane. It is found in the host smooth endoplasmic reticulum membrane. It localises to the host cell membrane. Functionally, essential for the anterograde spread of the infection throughout the host nervous system. Together with the gE/gI heterodimer, US9 is involved in the sorting and transport of viral structural components toward axon tips. The sequence is that of Envelope protein US9 homolog from Equine herpesvirus 1 (strain Kentucky A) (EHV-1).